The primary structure comprises 400 residues: Deoxyguanosinetriphosphate triphosphohydrolase-like protein (400 aa).

Residues 76–204 (RLTHTLEVAQ…VNIADPLAYC (129 aa)) form the HD domain.

It belongs to the dGTPase family. Type 2 subfamily.

This chain is Deoxyguanosinetriphosphate triphosphohydrolase-like protein, found in Syntrophus aciditrophicus (strain SB).